The following is a 622-amino-acid chain: Chaperone protein HscA homolog (622 aa).

This sequence belongs to the heat shock protein 70 family.

Functionally, chaperone involved in the maturation of iron-sulfur cluster-containing proteins. Has a low intrinsic ATPase activity which is markedly stimulated by HscB. The protein is Chaperone protein HscA homolog of Burkholderia pseudomallei (strain 668).